A 143-amino-acid chain; its full sequence is Antiholin-like protein LrgA (143 aa).

A run of 4 helical transmembrane segments spans residues 6-26, 30-50, 61-81, and 97-117; these read VYSF…SNII, LPIP…LLCL, LGTA…ISVI, and VIVV…QFIL.

This sequence belongs to the CidA/LrgA family. LrgA subfamily.

The protein localises to the cell membrane. In terms of biological role, inhibits the expression or activity of extracellular murein hydrolases by interacting, possibly with LrgB, with the holin-like protein CidA. The LrgAB and CidA proteins may affect the proton motive force of the membrane. May be involved in programmed cell death (PCD), possibly triggering PCD in response to antibiotics and environmental stresses. This chain is Antiholin-like protein LrgA, found in Bacillus anthracis (strain A0248).